Reading from the N-terminus, the 340-residue chain is Glycerol-3-phosphate dehydrogenase [NAD(P)+] (340 aa).

Residues Ser-13, Trp-14, and Lys-108 each coordinate NADPH. Positions 108, 139, and 141 each coordinate sn-glycerol 3-phosphate. Position 143 (Ala-143) interacts with NADPH. Sn-glycerol 3-phosphate is bound by residues Lys-194, Asp-247, Ser-257, Arg-258, and Asn-259. Lys-194 serves as the catalytic Proton acceptor. Position 258 (Arg-258) interacts with NADPH. Val-282 and Glu-284 together coordinate NADPH.

Belongs to the NAD-dependent glycerol-3-phosphate dehydrogenase family.

The protein resides in the cytoplasm. It catalyses the reaction sn-glycerol 3-phosphate + NAD(+) = dihydroxyacetone phosphate + NADH + H(+). The catalysed reaction is sn-glycerol 3-phosphate + NADP(+) = dihydroxyacetone phosphate + NADPH + H(+). The protein operates within membrane lipid metabolism; glycerophospholipid metabolism. Its function is as follows. Catalyzes the reduction of the glycolytic intermediate dihydroxyacetone phosphate (DHAP) to sn-glycerol 3-phosphate (G3P), the key precursor for phospholipid synthesis. This chain is Glycerol-3-phosphate dehydrogenase [NAD(P)+], found in Streptococcus sanguinis (strain SK36).